We begin with the raw amino-acid sequence, 156 residues long: MMKEETRTGIGLKDVSIRLVSESPLLPVGGFVYCEYGIPVRYLKIDENEVKLEISVEKLKNLSRVCENIEQVVDKVVEELRYALPEGVFTIAKVYANGIKLRELSYLEEYTSVGKGIIIDEDRELDQEMPAYVKENRETILGTIREVILLELMYSS.

Residues 43–84 are a coiled coil; it reads LKIDENEVKLEISVEKLKNLSRVCENIEQVVDKVVEELRYAL.

This is an uncharacterized protein from Aquifex aeolicus (strain VF5).